An 81-amino-acid chain; its full sequence is Xenopsin peptides (81 aa).

Residues 1 to 20 (MYKGIFLCVLLAVICANSLA) form the signal peptide. A propeptide spanning residues 21-37 (TPSSDADEDNDEVERYV) is cleaved from the precursor. The propeptide at 65–73 (EAMLRSAEA) is removed in mature form by a dipeptidylpeptidase.

Belongs to the gastrin/cholecystokinin family. Magainin subfamily. As to expression, XPF is synthesized in the stomach and stored in a novel granular multinucleated cell in the gastric mucosa, it is stored as active, processed peptides in large granules within the granular gland secretions of the skin.

It localises to the secreted. Its function is as follows. Xenopsin is a neurotensin-like octapeptide. In terms of biological role, XPF has antimicrobial activity. This chain is Xenopsin peptides, found in Xenopus laevis (African clawed frog).